The primary structure comprises 632 residues: Probable potassium transport system protein Kup 1 (632 aa).

A run of 12 helical transmembrane segments spans residues 17-37, 60-80, 106-126, 144-164, 175-195, 210-230, 254-274, 292-312, 344-364, 370-390, 401-421, and 426-446; these read LFYL…TSPL, LISL…VLFL, TALL…DAMI, PSLA…LFVV, FFGP…ISHI, AVSF…AVFL, WFLL…ALVL, ALLP…QAVI, IFLP…VLSF, LATA…IMAF, LPVA…FLGA, and IHDG…VMWT.

The protein belongs to the HAK/KUP transporter (TC 2.A.72) family.

It is found in the cell inner membrane. It catalyses the reaction K(+)(in) + H(+)(in) = K(+)(out) + H(+)(out). Functionally, transport of potassium into the cell. Likely operates as a K(+):H(+) symporter. The protein is Probable potassium transport system protein Kup 1 of Rhizobium etli (strain ATCC 51251 / DSM 11541 / JCM 21823 / NBRC 15573 / CFN 42).